We begin with the raw amino-acid sequence, 628 residues long: Probable potassium transport system protein Kup (628 aa).

Transmembrane regions (helical) follow at residues 56–76 (ILSL…VLLI), 109–129 (LILG…TPAI), 141–161 (AAPG…TLLF), 174–194 (FFGP…VVHI), 209–229 (ALAF…AVVL), 253–273 (WFSL…AMLL), 295–315 (LIVL…TAAF), 343–363 (IYVP…VVTF), 372–392 (AYGI…FFVI), 400–420 (WALC…FFAA), and 425–445 (ILDG…LMMT).

Belongs to the HAK/KUP transporter (TC 2.A.72) family.

It is found in the cell inner membrane. It catalyses the reaction K(+)(in) + H(+)(in) = K(+)(out) + H(+)(out). Its function is as follows. Transport of potassium into the cell. Likely operates as a K(+):H(+) symporter. This is Probable potassium transport system protein Kup from Methylibium petroleiphilum (strain ATCC BAA-1232 / LMG 22953 / PM1).